The primary structure comprises 253 residues: Small ribosomal subunit protein uS2 (253 aa).

Belongs to the universal ribosomal protein uS2 family.

The sequence is that of Small ribosomal subunit protein uS2 from Cereibacter sphaeroides (strain ATCC 17023 / DSM 158 / JCM 6121 / CCUG 31486 / LMG 2827 / NBRC 12203 / NCIMB 8253 / ATH 2.4.1.) (Rhodobacter sphaeroides).